Reading from the N-terminus, the 133-residue chain is Large ribosomal subunit protein bL17 (133 aa).

The protein belongs to the bacterial ribosomal protein bL17 family. In terms of assembly, part of the 50S ribosomal subunit. Contacts protein L32.

This chain is Large ribosomal subunit protein bL17, found in Alteromonas mediterranea (strain DSM 17117 / CIP 110805 / LMG 28347 / Deep ecotype).